A 1837-amino-acid chain; its full sequence is MHDSSWTEADILGVCSFLDIPKTKIDPLLQVDAFTSILIPLISKSKDYESIKNDRIVTEVNYEQQLRNSEKKLLQSNERYDLLEDERKLLENELSQIKEYLREKSSSYDTVLHDCSSLKSVNEALKQAQDQNLKQTAQLQNLLSDKEKEVEKKITIIKDLKDALASSTHQVLELQHTQQEKASLQTNYEFELQKLTQKNSILENNNTWLSRELQGVNDKLLSLHQEASLEKSQLSSQLSDAVLEKDALQRKVSSLSQQFTESNLRYQNIVAELSEMRKQYEFSQVSFEKEISSQKQISELWMEKCEDCSLRLKELQNSNGELEKLLEAAQSSFEEQLESHKEAEASLKSQINFLEKEVSSLESQLKLANERLRHYDEIEISDMSELKYSNLLNNSMKGFKGQSSVSDLYSERLYYKQKYEQTCQEVERLQRSYNHVMEEANLQHPLVKEQFKRFAHMQREIVAMSEQYQKSLEDCQKAKSRYEQLETLFKDKCTENKHYEQETKDLARQVQVLLHELDLCENGIVLGVDSRKKINSYVEKSLTEDETDTDQIISSRLVVFRNIRELQQQNQNLLSAVHELADRMEKDEKPDLDGAEIQEETLIKANETIDQLTKMLEEVSDQLRYSLKERDFFRSLVQENEKLLDMAPATPNSKLNTNLIEQTSYQRSLIRLEQLTNELESLKSISRNKEKKFEEAISSLQLEKSNIQLQLTSLTSERSLALEKLNDLEKSLVLSERSKDELDESYKSLQEQLASKKIEVQNVSSQLSICNSQLEQSNHIVDNLKSENLLLTSVKDKLKADLSNLESKLSSLQQDNFHMKAQIESSNQEYTATVDSMNSRILELSNDLRVANSKLSECSDDVRRLTLQNSFDLREHQTLVLQLQSNITELKQDITLQRTVRNQLEIQTTELKERLKFMEERQENLQSKLIAANKDTTQNPDNVEVEAISIELERTKEKLRMAELEKSNIQQKYLASEKTLEMMNETHEQFKHLVESEISTREEKITSLRSELLDLNKRVEVLKEEKESSSKELAKQLEDAVREKDSALSFKKDYEKIRSDADRVITSLKEDIEKERSLMKECHSNYESEIVSHGRTTQKLRDLRTEFDEVNTKYLKLKANFEQQHSGLSGAEKDWNIQRKAMEDEISSLKDYILGLENQNKLLHSQFDSLSQQITVLQQNSSENLNISANLEAVQDNDLRELVSYLRHEKEIMDNKYELTILDNRGLNQQVKSLQSTVDSLQLELNRLQSLPVSNDQTDTPIISGSQEVQLLYESNSVLRKDNDAKLGKIQELEKEVEKLNASLNPLQTEINELKAEIGAKTASLNLMKEYNSRWKLRFQSVLNKYERVDPTQLEELKKNCEALEKEKQELETKLQETAKETDTFKQQVNSLNEEVENLKKEVEQANTKNTRLAAAWNEKCENLKKSSLTRFAHLKQELTNKNKELTSKNAENEAMQKEIESLKDSNHQLQESASSDAEQITKEQFEQLKSEKERTEKELADSKNELEHLQSEAVDADGKTEISNLEKEIHELRSDKEGLVQQVQNLSAELAALREHSPTQGSLENADEIARLRSQLESTKQYYEKEKETEILAARSELVAEKEKTKEELENQLNEKSQRIKELEEQAQKNSSENTHDNIDDMIKQQVEEKLKENSANFDVKLKKVVAETEFRSKAKISVYEKKTRDLQNKITQLEETIENLNKQLSNPEKTDESTSSVTETKPVTSKPTASKADVGQNATEASSAKREPSGKSLSARLQGTGKQKGVQRPAVSRPVPMKPDSGKLSITGASKRIATSKNAAQNAKELSSTAKSGSLKRQRDDANKGGSSSNQKKAK.

3 coiled-coil regions span residues 59-378 (EVNY…YDEI), 415-519 (YKQK…ELDL), and 559-625 (VFRN…QLRY). Phosphothreonine is present on Thr-650. 3 coiled-coil regions span residues 661–1163 (EQTS…NKLL), 1222–1637 (LDNR…ENTH), and 1675–1712 (KAKI…PEKT). A disordered region spans residues 1464-1521 (KDSNHQLQESASSDAEQITKEQFEQLKSEKERTEKELADSKNELEHLQSEAVDADGKT). Residues 1468–1479 (HQLQESASSDAE) are compositionally biased toward polar residues. The segment covering 1480–1521 (QITKEQFEQLKSEKERTEKELADSKNELEHLQSEAVDADGKT) has biased composition (basic and acidic residues). The residue at position 1558 (Ser-1558) is a Phosphoserine. A Phosphothreonine modification is found at Thr-1560. Residue Ser-1563 is modified to Phosphoserine. Disordered stretches follow at residues 1602-1642 (EKEK…NIDD) and 1700-1837 (ENLN…KKAK). Over residues 1617 to 1628 (KSQRIKELEEQA) the composition is skewed to basic and acidic residues. Composition is skewed to polar residues over residues 1700-1730 (ENLN…SKPT), 1753-1763 (KSLSARLQGTG), 1795-1814 (IATS…TAKS), and 1827-1837 (GGSSSNQKKAK).

Its subcellular location is the cytoplasm. The protein localises to the nucleus. Its function is as follows. Functions as a component of the nuclear pore complex (NPC). NPC components, collectively referred to as nucleoporins (NUPs), can play the role of both NPC structural components and of docking or interaction partners for transiently associated nuclear transport factors. Active directional transport is assured by both, a Phe-Gly (FG) repeat affinity gradient for these transport factors across the NPC and a transport cofactor concentration gradient across the nuclear envelope. This Schizosaccharomyces pombe (strain 972 / ATCC 24843) (Fission yeast) protein is Nucleoporin nup211 (nup211).